Consider the following 835-residue polypeptide: Protein bicaudal D homolog 1 (835 aa).

Positions 1–264 (MAAEEALKTV…YINLSDSHIS (264 aa)) form a coiled coil. A disordered region spans residues 278–297 (EPNNDDKMNGHIHGPLGKLN). Residues 320–519 (ELNISEIQKL…TFSEELAQLY (200 aa)) adopt a coiled-coil conformation. Disordered stretches follow at residues 545–616 (RSGS…LDTS) and 800–835 (DHEQ…SAHN). Low complexity predominate over residues 557-572 (GLLSPRLSRRGVSSPV). Positions 581–590 (VSKENTETSK) are enriched in basic and acidic residues. Over residues 591-604 (EPSPTKTPTISPVI) the composition is skewed to low complexity. Residues 663–803 (IDKDKEALME…LEDLEFDHEQ (141 aa)) are a coiled coil. An interaction with RAB6A region spans residues 663–803 (IDKDKEALME…LEDLEFDHEQ (141 aa)).

It belongs to the BicD family. In terms of assembly, interacts with RAB6A. Interacts (via C-terminus) with RAB6B (GTP-bound); the interaction is direct. Interacts with CLIP-115 and KIFC2. Expressed in the brain, heart and skeletal muscle.

The protein resides in the golgi apparatus. Its function is as follows. Regulates coat complex coatomer protein I (COPI)-independent Golgi-endoplasmic reticulum transport by recruiting the dynein-dynactin motor complex. The protein is Protein bicaudal D homolog 1 (Bicd1) of Mus musculus (Mouse).